Consider the following 227-residue polypeptide: UPF0758 protein lpp2553 (227 aa).

The MPN domain maps to 102 to 225; the sequence is RLSNTQQTYA…YSIFAENKWV (124 aa). Zn(2+) is bound by residues His-173, His-175, and Asp-186. The short motif at 173–186 is the JAMM motif element; sequence HNHPSGLSDASQQD.

It belongs to the UPF0758 family.

The protein is UPF0758 protein lpp2553 of Legionella pneumophila (strain Paris).